The chain runs to 329 residues: Phosphate import ATP-binding protein PstB (329 aa).

One can recognise an ABC transporter domain in the interval 83–325 (FEIENLNFWY…PKQKETNRYI (243 aa)). 116–123 (GKSGCGKS) is an ATP binding site.

Belongs to the ABC transporter superfamily. Phosphate importer (TC 3.A.1.7) family. The complex is composed of two ATP-binding proteins (PstB), two transmembrane proteins (PstC and PstA) and a solute-binding protein (PstS).

It is found in the cell membrane. It carries out the reaction phosphate(out) + ATP + H2O = ADP + 2 phosphate(in) + H(+). Part of the ABC transporter complex PstSACB involved in phosphate import. Responsible for energy coupling to the transport system. The polypeptide is Phosphate import ATP-binding protein PstB (Mycoplasma pneumoniae (strain ATCC 29342 / M129 / Subtype 1) (Mycoplasmoides pneumoniae)).